The primary structure comprises 88 residues: Small ribosomal subunit protein bS20 (88 aa).

Belongs to the bacterial ribosomal protein bS20 family.

Functionally, binds directly to 16S ribosomal RNA. The protein is Small ribosomal subunit protein bS20 of Micrococcus luteus (strain ATCC 4698 / DSM 20030 / JCM 1464 / CCM 169 / CCUG 5858 / IAM 1056 / NBRC 3333 / NCIMB 9278 / NCTC 2665 / VKM Ac-2230) (Micrococcus lysodeikticus).